The chain runs to 371 residues: Loganic acid O-methyltransferase (371 aa).

Tyr-31 serves as a coordination point for S-adenosyl-L-homocysteine. Loganate is bound by residues Tyr-37 and Gln-38. Residues Cys-78, Asn-83, Asp-114, His-115, Ser-141, and Phe-142 each coordinate S-adenosyl-L-homocysteine. Residues His-162 and Trp-163 each contribute to the loganate site. A Mg(2+)-binding site is contributed by Asn-180. Loganate contacts are provided by Ala-241 and His-245. Residues Asp-267, Phe-269, and Asn-270 each contribute to the Mg(2+) site. Loganate-binding residues include Gln-273 and Gln-316.

The protein belongs to the methyltransferase superfamily. Type-7 methyltransferase family. Homodimer. Mg(2+) serves as cofactor. As to expression, expressed in leaves (especially in leaf epidermis), flowers, siliques and stems, and, at low levels, in hairy roots.

The catalysed reaction is loganate + S-adenosyl-L-methionine = loganin + S-adenosyl-L-homocysteine. It participates in alkaloid biosynthesis. Strongly repressed by loganin and slightly by S-adenosyl-L-homocysteine. Its function is as follows. Component of the seco-iridoid and derivatives monoterpenoid indole alkaloids (MIAs, e.g. vinblastine and ajmalicine) biosynthesis pathway. Catalyzes the methylation of loganic acid (6S,7R) to produce loganin. Weak activity with secologanic acid as substrate. Inactive on deoxyloganic, dehydrologanic, epiloganic and loganetic acid. The chain is Loganic acid O-methyltransferase from Catharanthus roseus (Madagascar periwinkle).